Consider the following 167-residue polypeptide: NAD(P)H-quinone oxidoreductase subunit I, chloroplastic (167 aa).

2 4Fe-4S ferredoxin-type domains span residues 55–84 (GRIH…VDWK) and 95–124 (LNYS…MTEE). Cys64, Cys67, Cys70, Cys74, Cys104, Cys107, Cys110, and Cys114 together coordinate [4Fe-4S] cluster.

The protein belongs to the complex I 23 kDa subunit family. NDH is composed of at least 16 different subunits, 5 of which are encoded in the nucleus. Requires [4Fe-4S] cluster as cofactor.

It is found in the plastid. The protein localises to the chloroplast thylakoid membrane. It catalyses the reaction a plastoquinone + NADH + (n+1) H(+)(in) = a plastoquinol + NAD(+) + n H(+)(out). The catalysed reaction is a plastoquinone + NADPH + (n+1) H(+)(in) = a plastoquinol + NADP(+) + n H(+)(out). NDH shuttles electrons from NAD(P)H:plastoquinone, via FMN and iron-sulfur (Fe-S) centers, to quinones in the photosynthetic chain and possibly in a chloroplast respiratory chain. The immediate electron acceptor for the enzyme in this species is believed to be plastoquinone. Couples the redox reaction to proton translocation, and thus conserves the redox energy in a proton gradient. This is NAD(P)H-quinone oxidoreductase subunit I, chloroplastic from Draba nemorosa (Woodland whitlowgrass).